A 719-amino-acid polypeptide reads, in one-letter code: MKLKNQDKHQSFSSNAKVDKISTDSLKNETDIELQNINHEDCLKMSEYENVEPFVSASTIQTGIGIAGKILGTLGVPFAGQVASLYSFILGELWPKGKNQWEIFMEHVEEIINQKISTYARNKALTDLKGLGDALAVYHDSLESWVGNRNNTRARSVVKSQYIALELMFVQKLPSFAVSGEEVPLLPIYAQAANLHLLLLRDASIFGKEWGLSSSEISTFYNRQVERAGDYSDHCVKWYSTGLNNLRGTNAESWVRYNQFRRDMTLMVLDLVALFPSYDTQMYPIKTTAQLTREVYTDAIGTVHPHPSFTSTTWYNNNAPSFSAIEAAVVRNPHLLDFLEQVTIYSLLSRWSNTQYMNMWGGHKLEFRTIGGTLNISTQGSTNTSINPVTLPFTSRDVYRTESLAGLNLFLTQPVNGVPRVDFHWKFVTHPIASDNFYYPGYAGIGTQLQDSENELPPEATGQPNYESYSHRLSHIGLISASHVKALVYSWTHRSADRTNTIEPNSITQIPLVKAFNLSSGAAVVRGPGFTGGDILRRTNTGTFGDIRVNINPPFAQRYRVRIRYASTTDLQFHTSINGKAINQGNFSATMNRGEDLDYKTFRTVGFTTPFSFLDVQSTFTIGAWNFSSGNEVYIDRIEFVPVEVTYEAEYDFEKAQEKVTALFTSTNPRGLKTDVKDYHIDQVSNLVESLSDEFYLDEKRELFEIVKYAKQLHIERNM.

This sequence belongs to the delta endotoxin family.

Promotes colloidosmotic lysis by binding to the midgut epithelial cells of certain coleopteran and lepidopteran species. Active on Plutella xylostella and Bombyx mori. The protein is Pesticidal crystal protein Cry1Ia (cry1Ia) of Bacillus thuringiensis subsp. kurstaki.